The sequence spans 274 residues: Indole-3-glycerol phosphate synthase (274 aa).

This sequence belongs to the TrpC family.

It catalyses the reaction 1-(2-carboxyphenylamino)-1-deoxy-D-ribulose 5-phosphate + H(+) = (1S,2R)-1-C-(indol-3-yl)glycerol 3-phosphate + CO2 + H2O. It functions in the pathway amino-acid biosynthesis; L-tryptophan biosynthesis; L-tryptophan from chorismate: step 4/5. The protein is Indole-3-glycerol phosphate synthase of Kineococcus radiotolerans (strain ATCC BAA-149 / DSM 14245 / SRS30216).